A 320-amino-acid polypeptide reads, in one-letter code: Cytochrome f (320 aa).

The first 35 residues, 1–35, serve as a signal peptide directing secretion; the sequence is MENRKTFSWLKEQMIRSISVSIMIYVITRTSISNA. Positions 36, 56, 59, and 60 each coordinate heme. A helical transmembrane segment spans residues 286 to 306; it reads VQGLLFFFASVILAQVFLVLK.

This sequence belongs to the cytochrome f family. In terms of assembly, the 4 large subunits of the cytochrome b6-f complex are cytochrome b6, subunit IV (17 kDa polypeptide, petD), cytochrome f and the Rieske protein, while the 4 small subunits are PetG, PetL, PetM and PetN. The complex functions as a dimer. Requires heme as cofactor.

Its subcellular location is the plastid. The protein localises to the chloroplast thylakoid membrane. Component of the cytochrome b6-f complex, which mediates electron transfer between photosystem II (PSII) and photosystem I (PSI), cyclic electron flow around PSI, and state transitions. The chain is Cytochrome f from Saccharum hybrid (Sugarcane).